The sequence spans 424 residues: Serine--tRNA ligase (424 aa).

231-233 (TAE) serves as a coordination point for L-serine. 262–264 (RSE) provides a ligand contact to ATP. An L-serine-binding site is contributed by Glu-285. Residue 349-352 (EISS) participates in ATP binding. Residue Ser-385 coordinates L-serine.

Belongs to the class-II aminoacyl-tRNA synthetase family. Type-1 seryl-tRNA synthetase subfamily. As to quaternary structure, homodimer. The tRNA molecule binds across the dimer.

The protein resides in the cytoplasm. It catalyses the reaction tRNA(Ser) + L-serine + ATP = L-seryl-tRNA(Ser) + AMP + diphosphate + H(+). The catalysed reaction is tRNA(Sec) + L-serine + ATP = L-seryl-tRNA(Sec) + AMP + diphosphate + H(+). It participates in aminoacyl-tRNA biosynthesis; selenocysteinyl-tRNA(Sec) biosynthesis; L-seryl-tRNA(Sec) from L-serine and tRNA(Sec): step 1/1. Catalyzes the attachment of serine to tRNA(Ser). Is also able to aminoacylate tRNA(Sec) with serine, to form the misacylated tRNA L-seryl-tRNA(Sec), which will be further converted into selenocysteinyl-tRNA(Sec). The polypeptide is Serine--tRNA ligase (Marinobacter nauticus (strain ATCC 700491 / DSM 11845 / VT8) (Marinobacter aquaeolei)).